Reading from the N-terminus, the 562-residue chain is MDTVRWIISTAPEIFLLLAVAIGTMLGRLKIHGFAIGTTACILIVSVLIGQLGTFTFPALLRIVLFSLFVFTIGYKSGPEFFASLSVRTLAQVAMALVLGGTGLVIVLAFAFALKLDPGTASGLAAGALTQSSVIGTASGALAQLGLPKTVLEQQEANIAAGYAVTYVLGYILTLLYVPFAAPKLMGVNLKDEAKKLEVELSGGAPPKTENLSYRKFQARAYRVTAAAGRTVKAIEEDIGSRTVIERIVRQGADIEPRLDTVLEAGDDIVIAGRTAAIVAAKPIIGTEIDADEILKAIPGNVLDVLVDNRNLHGRSIRDVADRIGGDARGVFLRALTRHGREAPLSADTRVYVGDVMTLVGSTRNIERAAKQVGQIVRSGDRTDIAFLAAGIAAGLLAGLVSFKVGGIALTLGGGGGALIAGLLCGWLRSRRPTMGAMPPAAQQTLSDLGLGGFIAAIGLANGHAAWVAIQAHGLLLVGMGLVVTLVPLVVATLFAYHVLRMNPVITCGALAGAMTVDAAVTGACEIAESQTPVLGVAVPYAVGNVVLTVLGPIIVACTFVG.

5 consecutive transmembrane segments (helical) span residues 4–26 (VRWI…GTML), 33–55 (GFAI…LGTF), 59–78 (ALLR…YKSG), 90–112 (LAQV…AFAF), and 159–181 (IAAG…VPFA). 2 RCK C-terminal domains span residues 207-287 (PKTE…IIGT) and 295-375 (LKAI…QVGQ). Transmembrane regions (helical) follow at residues 385 to 402 (IAFL…GLVS), 406 to 428 (GGIA…CGWL), 449 to 471 (LGLG…VAIQ), 476 to 498 (LLVG…FAYH), 505 to 524 (VITC…VTGA), and 539 to 561 (VPYA…CTFV).

Belongs to the AAE transporter (TC 2.A.81) family.

It is found in the cell membrane. This is an uncharacterized protein from Bradyrhizobium diazoefficiens (strain JCM 10833 / BCRC 13528 / IAM 13628 / NBRC 14792 / USDA 110).